The following is a 325-amino-acid chain: Tetraacyldisaccharide 4'-kinase (325 aa).

Residue Ser53 to Thr60 coordinates ATP.

Belongs to the LpxK family.

It catalyses the reaction a lipid A disaccharide + ATP = a lipid IVA + ADP + H(+). It participates in glycolipid biosynthesis; lipid IV(A) biosynthesis; lipid IV(A) from (3R)-3-hydroxytetradecanoyl-[acyl-carrier-protein] and UDP-N-acetyl-alpha-D-glucosamine: step 6/6. Functionally, transfers the gamma-phosphate of ATP to the 4'-position of a tetraacyldisaccharide 1-phosphate intermediate (termed DS-1-P) to form tetraacyldisaccharide 1,4'-bis-phosphate (lipid IVA). The chain is Tetraacyldisaccharide 4'-kinase from Actinobacillus succinogenes (strain ATCC 55618 / DSM 22257 / CCUG 43843 / 130Z).